The chain runs to 234 residues: Large ribosomal subunit protein uL1 (234 aa).

Belongs to the universal ribosomal protein uL1 family. In terms of assembly, part of the 50S ribosomal subunit.

In terms of biological role, binds directly to 23S rRNA. The L1 stalk is quite mobile in the ribosome, and is involved in E site tRNA release. Its function is as follows. Protein L1 is also a translational repressor protein, it controls the translation of the L11 operon by binding to its mRNA. The protein is Large ribosomal subunit protein uL1 of Syntrophobacter fumaroxidans (strain DSM 10017 / MPOB).